The sequence spans 1088 residues: Probable cellulose synthase A catalytic subunit 9 [UDP-forming] (1088 aa).

Methionine 1 is modified (N-acetylmethionine). Residues 1-283 (MNTGGRLIAG…RSSRINPYRM (283 aa)) are Cytoplasmic-facing. 8 residues coordinate Zn(2+): cysteine 39, cysteine 42, cysteine 58, cysteine 61, cysteine 66, cysteine 69, cysteine 81, and cysteine 84. An RING-type; degenerate zinc finger spans residues 39–85 (CKICRDEIELTDNGEPFIACNECAFPTCRPCYEYERREGNQACPQCG). The chain crosses the membrane as a helical span at residues 284–304 (LIFCRLAILGLFFHYRILHPV). Over 305–306 (ND) the chain is Extracellular. A helical membrane pass occupies residues 307-327 (AFGLWLTSVICEIWFAVSWIL). Topologically, residues 328-871 (DQFPKWYPIE…INSVVYPWTS (544 aa)) are cytoplasmic. Residues serine 366, lysine 372, glutamate 373, aspartate 402, and lysine 543 each coordinate UDP-alpha-D-glucose. Aspartate 402 is a catalytic residue. Lysine 544 and aspartate 568 together coordinate Mn(2+). Aspartate 788 is a catalytic residue. Residues 872–892 (LPLLVYCSLPAICLLTGKFIV) form a helical membrane-spanning segment. Topologically, residues 893–897 (PEISN) are extracellular. Residues 898–918 (YAGILFLLMFMSIAVTGILEM) traverse the membrane as a helical segment. Over 919–933 (QWGKIGIDDWWRNEQ) the chain is Cytoplasmic. The chain crosses the membrane as a helical span at residues 934–954 (FWVIGGVSSHLFALFQGLLKV). Residues 955-983 (LAGVSTNFTVTSKAADDGEFSELYIFKWT) lie on the Extracellular side of the membrane. Asparagine 961 carries N-linked (GlcNAc...) asparagine glycosylation. The helical transmembrane segment at 984–1004 (SLLIPPTTLLIINIVGVIVGV) threads the bilayer. The Cytoplasmic segment spans residues 1005 to 1015 (SDAINNGYDSW). The helical transmembrane segment at 1016–1036 (GPLFGRLFFALWVIVHLYPFL) threads the bilayer. Residues 1037–1045 (KGLLGKQDR) lie on the Extracellular side of the membrane. The chain crosses the membrane as a helical span at residues 1046–1066 (VPTIILVWSILLASILTLLWV). At 1067 to 1088 (RVNPFVSKDGPVLEICGLDCLK) the chain is on the cytoplasmic side.

This sequence belongs to the glycosyltransferase 2 family. Plant cellulose synthase subfamily. Mn(2+) is required as a cofactor. The cofactor is Zn(2+). In terms of tissue distribution, expressed in young plants, stems and flowers.

Its subcellular location is the cell membrane. It carries out the reaction [(1-&gt;4)-beta-D-glucosyl](n) + UDP-alpha-D-glucose = [(1-&gt;4)-beta-D-glucosyl](n+1) + UDP + H(+). Its pathway is glycan metabolism; plant cellulose biosynthesis. In terms of biological role, probable catalytic subunit of cellulose synthase terminal complexes ('rosettes'), required for beta-1,4-glucan microfibril crystallization, a major mechanism of the cell wall formation. The protein is Probable cellulose synthase A catalytic subunit 9 [UDP-forming] of Arabidopsis thaliana (Mouse-ear cress).